The sequence spans 461 residues: Cysteine--tRNA ligase (461 aa).

Cys29 is a binding site for Zn(2+). The 'HIGH' region motif lies at 31–41 (MTIYDLCHVGH). Residues Cys213, His238, and Glu242 each coordinate Zn(2+). The 'KMSKS' region signature appears at 274–278 (KMSKS). An ATP-binding site is contributed by Lys277.

The protein belongs to the class-I aminoacyl-tRNA synthetase family. In terms of assembly, monomer. Zn(2+) serves as cofactor.

Its subcellular location is the cytoplasm. It carries out the reaction tRNA(Cys) + L-cysteine + ATP = L-cysteinyl-tRNA(Cys) + AMP + diphosphate. The polypeptide is Cysteine--tRNA ligase (Methylibium petroleiphilum (strain ATCC BAA-1232 / LMG 22953 / PM1)).